The following is a 475-amino-acid chain: Ribulose bisphosphate carboxylase large chain (475 aa).

A propeptide spanning residues 1–2 is cleaved from the precursor; the sequence is MS. Position 3 is an N-acetylproline (P3). K14 carries the N6,N6,N6-trimethyllysine modification. Substrate-binding residues include N123 and T173. K175 (proton acceptor) is an active-site residue. K177 serves as a coordination point for substrate. Mg(2+)-binding residues include K201, D203, and E204. K201 carries the post-translational modification N6-carboxylysine. The active-site Proton acceptor is the H294. Substrate contacts are provided by R295, H327, and S379.

This sequence belongs to the RuBisCO large chain family. Type I subfamily. Heterohexadecamer of 8 large chains and 8 small chains. The cofactor is Mg(2+).

Its subcellular location is the plastid. It is found in the chloroplast. The enzyme catalyses 2 (2R)-3-phosphoglycerate + 2 H(+) = D-ribulose 1,5-bisphosphate + CO2 + H2O. It carries out the reaction D-ribulose 1,5-bisphosphate + O2 = 2-phosphoglycolate + (2R)-3-phosphoglycerate + 2 H(+). In terms of biological role, ruBisCO catalyzes two reactions: the carboxylation of D-ribulose 1,5-bisphosphate, the primary event in carbon dioxide fixation, as well as the oxidative fragmentation of the pentose substrate in the photorespiration process. Both reactions occur simultaneously and in competition at the same active site. The sequence is that of Ribulose bisphosphate carboxylase large chain from Huperzia lucidula (Shining clubmoss).